A 113-amino-acid chain; its full sequence is U11-theraphotoxin-Hhn1a (113 aa).

Residues 1–21 (MNTVRVTFLLVFVLAVSLGQT) form the signal peptide. Residues 22-74 (DKDENRMEMQEKTEQGKSYLDFAENLLLQKLEELEAKLLEEDSEESRNSRQKR) constitute a propeptide that is removed on maturation. 3 disulfide bridges follow: Cys75/Cys90, Cys82/Cys95, and Cys89/Cys110.

Belongs to the neurotoxin 14 (magi-1) family. 01 (HNTX-16) subfamily. As to expression, expressed by the venom gland.

It is found in the secreted. Functionally, probable ion channel inhibitor. The polypeptide is U11-theraphotoxin-Hhn1a (Cyriopagopus hainanus (Chinese bird spider)).